The sequence spans 259 residues: Protein-tyrosine phosphatase RolB (259 aa).

The tract at residues Gly-219–Ala-259 is disordered.

It catalyses the reaction O-phospho-L-tyrosyl-[protein] + H2O = L-tyrosyl-[protein] + phosphate. In terms of biological role, induces differentiation and growth of neoplastic roots (hairy roots). Seems to function as a tyrosine phosphatase. The polypeptide is Protein-tyrosine phosphatase RolB (rolB) (Rhizobium rhizogenes (Agrobacterium rhizogenes)).